Reading from the N-terminus, the 474-residue chain is UDP-N-acetylmuramate--L-alanine ligase (474 aa).

112–118 is a binding site for ATP; sequence GTHGKTT.

It belongs to the MurCDEF family.

The protein localises to the cytoplasm. The enzyme catalyses UDP-N-acetyl-alpha-D-muramate + L-alanine + ATP = UDP-N-acetyl-alpha-D-muramoyl-L-alanine + ADP + phosphate + H(+). The protein operates within cell wall biogenesis; peptidoglycan biosynthesis. In terms of biological role, cell wall formation. This chain is UDP-N-acetylmuramate--L-alanine ligase, found in Cupriavidus taiwanensis (strain DSM 17343 / BCRC 17206 / CCUG 44338 / CIP 107171 / LMG 19424 / R1) (Ralstonia taiwanensis (strain LMG 19424)).